Consider the following 271-residue polypeptide: Inactive phospholipid phosphatase 7 (271 aa).

Residues 1-69 (MPVSQSRARA…RQSQQLPEED (69 aa)) form a disordered region. At 1-112 (MPVSQSRARA…AASWASARSM (112 aa)) the chain is on the cytoplasmic side. Positions 24 to 36 (SLNQPPKGTQEPR) are enriched in polar residues. Phosphoserine occurs at positions 43 and 62. The interval 70–91 (CMQLNPSFKGIAFNSLLAIDIC) is interaction with MTOR. Residues 113 to 133 (VKLIGITSHGIPWIGGTILCL) form a helical membrane-spanning segment. The Extracellular portion of the chain corresponds to 134–141 (VRSSTLAG). Residues 142–162 (QEVLMNLLLALLLDIMTVAGV) traverse the membrane as a helical segment. At 163–202 (QKLIKRRGPYETSPGLLDYLTMDIYAFPAGHASRAAMVSK) the chain is on the cytoplasmic side. A helical membrane pass occupies residues 203 to 223 (FFLSHLVLAVPLRVLLVLWAF). Topologically, residues 224 to 239 (CVGLSRVMIGRHHITD) are extracellular. The helical transmembrane segment at 240–260 (VISGFIIGYFQFRLVELVWMS) threads the bilayer. Residues 261–271 (SNTCQMLISAW) are Cytoplasmic-facing.

The protein belongs to the PA-phosphatase related phosphoesterase family. Homo- and heterooligomer. Interacts with MTOR; controls MTOR-dependent IGF2 expression during myoblast differentiation.

The protein resides in the nucleus envelope. Its subcellular location is the endoplasmic reticulum membrane. It is found in the membrane. Its function is as follows. Plays a role as negative regulator of myoblast differentiation, in part through effects on MTOR signaling. Has no detectable enzymatic activity. The polypeptide is Inactive phospholipid phosphatase 7 (Rattus norvegicus (Rat)).